A 200-amino-acid polypeptide reads, in one-letter code: ATP-dependent Clp protease proteolytic subunit (200 aa).

Ser98 serves as the catalytic Nucleophile. His123 is a catalytic residue.

It belongs to the peptidase S14 family. In terms of assembly, fourteen ClpP subunits assemble into 2 heptameric rings which stack back to back to give a disk-like structure with a central cavity, resembling the structure of eukaryotic proteasomes.

It is found in the cytoplasm. It carries out the reaction Hydrolysis of proteins to small peptides in the presence of ATP and magnesium. alpha-casein is the usual test substrate. In the absence of ATP, only oligopeptides shorter than five residues are hydrolyzed (such as succinyl-Leu-Tyr-|-NHMec, and Leu-Tyr-Leu-|-Tyr-Trp, in which cleavage of the -Tyr-|-Leu- and -Tyr-|-Trp bonds also occurs).. Cleaves peptides in various proteins in a process that requires ATP hydrolysis. Has a chymotrypsin-like activity. Plays a major role in the degradation of misfolded proteins. This Deinococcus geothermalis (strain DSM 11300 / CIP 105573 / AG-3a) protein is ATP-dependent Clp protease proteolytic subunit.